The following is a 452-amino-acid chain: Methionine aminopeptidase 2-1 (452 aa).

The tract at residues 1–100 is disordered; that stretch reads MAAKVADDVA…VRIDEVFPND (100 aa). The segment covering 37–51 has biased composition (acidic residues); sequence EHDDSDDDNEAEDGA. Residues 60–73 show a composition bias toward basic residues; it reads KKKKKRKPRKKKKA. Position 205 (His205) interacts with substrate. Asp225, Asp236, and His305 together coordinate a divalent metal cation. Position 313 (His313) interacts with substrate. A divalent metal cation is bound by residues Glu338 and Glu433.

It belongs to the peptidase M24A family. Methionine aminopeptidase eukaryotic type 2 subfamily. Requires Co(2+) as cofactor. The cofactor is Zn(2+). Mn(2+) serves as cofactor. Fe(2+) is required as a cofactor.

The protein resides in the cytoplasm. The enzyme catalyses Release of N-terminal amino acids, preferentially methionine, from peptides and arylamides.. Functionally, cotranslationally removes the N-terminal methionine from nascent proteins. The N-terminal methionine is often cleaved when the second residue in the primary sequence is small and uncharged (Met-Ala-, Cys, Gly, Pro, Ser, Thr, or Val). This is Methionine aminopeptidase 2-1 from Pyrenophora teres f. teres (strain 0-1) (Barley net blotch fungus).